The chain runs to 163 residues: Small heat shock protein C1 (163 aa).

Residues Met-55 to Asn-163 enclose the sHSP domain.

This sequence belongs to the small heat shock protein (HSP20) family.

This is Small heat shock protein C1 (hspC1) from Rickettsia typhi (strain ATCC VR-144 / Wilmington).